A 524-amino-acid polypeptide reads, in one-letter code: Inosine-5'-monophosphate dehydrogenase (524 aa).

2 consecutive CBS domains span residues 121 to 180 (FILD…NTPV) and 184 to 242 (MTPR…PLAS). Residues 280–282 (DSS) and 330–332 (GMG) each bind NAD(+). 2 residues coordinate K(+): Gly-332 and Gly-334. Residue Ser-335 participates in IMP binding. Cys-337 lines the K(+) pocket. Cys-337 acts as the Thioimidate intermediate in catalysis. IMP contacts are provided by residues 370 to 372 (DGG), 393 to 394 (GG), and 417 to 421 (YRGMG). The Proton acceptor role is filled by Arg-439. Residue Gln-451 coordinates IMP. Residues Glu-510 and Gly-511 each contribute to the K(+) site.

The protein belongs to the IMPDH/GMPR family. As to quaternary structure, homotetramer. Requires K(+) as cofactor.

The protein localises to the cytoplasm. It catalyses the reaction IMP + NAD(+) + H2O = XMP + NADH + H(+). It participates in purine metabolism; XMP biosynthesis via de novo pathway; XMP from IMP: step 1/1. Its activity is regulated as follows. Mycophenolic acid (MPA) is a non-competitive inhibitor that prevents formation of the closed enzyme conformation by binding to the same site as the amobile flap. In contrast, mizoribine monophosphate (MZP) is a competitive inhibitor that induces the closed conformation. MPA is a potent inhibitor of mammalian IMPDHs but a poor inhibitor of the bacterial enzymes. MZP is a more potent inhibitor of bacterial IMPDH. Catalyzes the conversion of inosine 5'-phosphate (IMP) to xanthosine 5'-phosphate (XMP), the first committed and rate-limiting step in the de novo synthesis of guanine nucleotides, and therefore plays an important role in the regulation of cell growth. This chain is Inosine-5'-monophosphate dehydrogenase (gua1), found in Schizosaccharomyces pombe (strain 972 / ATCC 24843) (Fission yeast).